Consider the following 184-residue polypeptide: Oligoribonuclease (184 aa).

Residues 9–172 enclose the Exonuclease domain; sequence LIWIDLEMTG…DDIRESIEEL (164 aa). Tyr-130 is an active-site residue.

Belongs to the oligoribonuclease family.

The protein resides in the cytoplasm. Functionally, 3'-to-5' exoribonuclease specific for small oligoribonucleotides. This chain is Oligoribonuclease, found in Actinobacillus pleuropneumoniae serotype 5b (strain L20).